The primary structure comprises 276 residues: MRWEEKDIITEAKKSGFKAIPIFTKDFYSAIGVGENYSELEADVIIQRNTSHARALTTSLIFEGWNYNVVNDATSLFKCGNKLYTLSLLAKHNIKTPRTIVTFSKDKAVDLAKKIGFPAVIKPIEGSWGRMVAKAVDEDILYSFLEYQEYTTSQFRQIYLVQEFVKKPNRDIRIFVMGDEAPVGIYRVNERNWKTNTALGARALPLKIDDELRDLALKVRDIMGGFFLGIDIFEDPERGYLVNEVNGVPEYKNTVRVNNFNVSSYLLNKLREWIKK.

Residues K82, K122, 126–132 (GSWGRMV), 162–173 (QEFVKKPNRDIR), R187, and N196 contribute to the ATP site. Residues 86-271 (LSLLAKHNIK…VSSYLLNKLR (186 aa)) form the ATP-grasp domain. Mg(2+)-binding residues include D231, E244, and N246. The N-[TS] motif that is essential for LysX substrate specificity motif lies at 253-254 (NT).

This sequence belongs to the RimK family. LysX subfamily. Homodimer. The cofactor is Mg(2+).

The catalysed reaction is [amino-group carrier protein]-C-terminal-L-glutamate + L-2-aminoadipate + ATP = [amino-group carrier protein]-C-terminal-N-(1,4-dicarboxybutan-1-yl)-L-glutamine + ADP + phosphate + H(+). It participates in amino-acid biosynthesis; L-lysine biosynthesis via AAA pathway; L-lysine from L-alpha-aminoadipate (Thermus route): step 1/5. Its function is as follows. Catalyzes the ATP-dependent formation of a covalent bond between the amino group of alpha-aminoadipate (AAA) and the gamma-carboxyl group of the C-terminal glutamate residue in LysW. The sequence is that of Alpha-aminoadipate--LysW ligase LysX (lysX) from Sulfolobus acidocaldarius (strain ATCC 33909 / DSM 639 / JCM 8929 / NBRC 15157 / NCIMB 11770).